The following is a 510-amino-acid chain: ATP synthase subunit alpha (510 aa).

169–176 (GDRQTGKT) is an ATP binding site.

This sequence belongs to the ATPase alpha/beta chains family. In terms of assembly, F-type ATPases have 2 components, CF(1) - the catalytic core - and CF(0) - the membrane proton channel. CF(1) has five subunits: alpha(3), beta(3), gamma(1), delta(1), epsilon(1). CF(0) has four main subunits: a(1), b(1), b'(1) and c(9-12).

It localises to the cell inner membrane. It carries out the reaction ATP + H2O + 4 H(+)(in) = ADP + phosphate + 5 H(+)(out). Produces ATP from ADP in the presence of a proton gradient across the membrane. The alpha chain is a regulatory subunit. The sequence is that of ATP synthase subunit alpha from Rhodopseudomonas palustris (strain HaA2).